A 143-amino-acid chain; its full sequence is Insulin-like growth factor 1 (143 aa).

The signal sequence occupies residues 1 to 32 (MITPTVKMRILSSSHLFYLALCLLTFTSSATA). The tract at residues 33 to 61 (GPETLCGAELVDALQFVCGDRGFYFNKPT) is b. Disulfide bonds link Cys-38–Cys-80, Cys-50–Cys-93, and Cys-79–Cys-84. The c stretch occupies residues 62–73 (GYGSSSRRAPQT). Residues 74 to 94 (GIVDECCFRSCDLRRLEMYCA) form an a region. A d region spans residues 95-102 (PLKPAKAA). Positions 99 to 143 (AKAARSVRAQRHTDMPKTQKYQPPSTNKKMKSQRRRKGSTFEEHK) are disordered. Residues 103–143 (RSVRAQRHTDMPKTQKYQPPSTNKKMKSQRRRKGSTFEEHK) constitute a propeptide, e peptide. Over residues 126–136 (KKMKSQRRRKG) the composition is skewed to basic residues.

Belongs to the insulin family. Forms a ternary complex with IGFR1 and ITGAV:ITGB3. Forms a ternary complex with IGFR1 and ITGA6:ITGB4. Forms a ternary complex with IGFBP3 and ALS.

Its subcellular location is the secreted. In terms of biological role, the insulin-like growth factors, isolated from plasma, are structurally and functionally related to insulin but have a much higher growth-promoting activity. May be a physiological regulator of [1-14C]-2-deoxy-D-glucose (2DG) transport and glycogen synthesis in osteoblasts. Stimulates glucose transport in bone-derived osteoblastic (PyMS) cells and is effective at much lower concentrations than insulin, not only regarding glycogen and DNA synthesis but also with regard to enhancing glucose uptake. May play a role in synapse maturation. Ca(2+)-dependent exocytosis of IGF1 is required for sensory perception of smell in the olfactory bulb. Acts as a ligand for IGF1R. Binds to the alpha subunit of IGF1R, leading to the activation of the intrinsic tyrosine kinase activity which autophosphorylates tyrosine residues in the beta subunit thus initiating a cascade of down-stream signaling events leading to activation of the PI3K-AKT/PKB and the Ras-MAPK pathways. Binds to integrins ITGAV:ITGB3 and ITGA6:ITGB4. Its binding to integrins and subsequent ternary complex formation with integrins and IGFR1 are essential for IGF1 signaling. Induces the phosphorylation and activation of IGFR1, MAPK3/ERK1, MAPK1/ERK2 and AKT1. As part of the MAPK/ERK signaling pathway, acts as a negative regulator of apoptosis in cardiomyocytes via promotion of STUB1/CHIP-mediated ubiquitination and degradation of ICER-type isoforms of CREM. The protein is Insulin-like growth factor 1 of Oryctolagus cuniculus (Rabbit).